The following is a 493-amino-acid chain: Cysteine--tRNA ligase (493 aa).

Cysteine 29 is a binding site for Zn(2+). The short motif at 31-41 (ATVQSEPHIGH) is the 'HIGH' region element. Positions 214, 239, and 243 each coordinate Zn(2+). A 'KMSKS' region motif is present at residues 270-274 (KMSKS). Lysine 273 is a binding site for ATP.

The protein belongs to the class-I aminoacyl-tRNA synthetase family. Monomer. The cofactor is Zn(2+).

It localises to the cytoplasm. It catalyses the reaction tRNA(Cys) + L-cysteine + ATP = L-cysteinyl-tRNA(Cys) + AMP + diphosphate. The sequence is that of Cysteine--tRNA ligase from Renibacterium salmoninarum (strain ATCC 33209 / DSM 20767 / JCM 11484 / NBRC 15589 / NCIMB 2235).